The sequence spans 55 residues: Large ribosomal subunit protein bL33 (55 aa).

This sequence belongs to the bacterial ribosomal protein bL33 family.

The polypeptide is Large ribosomal subunit protein bL33 (Clavibacter sepedonicus (Clavibacter michiganensis subsp. sepedonicus)).